We begin with the raw amino-acid sequence, 73 residues long: ComX pheromone (73 aa).

Residues 1–52 (MKHIDKIISHLVNNPEAFDQFKNGNLTLLNINEKEKKAILYAFEQGEVPRTS) constitute a propeptide that is removed on maturation. Residue tryptophan 54 is the site of 3'-farnesyl-2',N2-cyclotryptophan attachment. Residues 59–73 (AISNFFEDDKRKSLI) constitute a propeptide that is removed on maturation.

Interacts directly with the sensor histidine kinase ComP and stimulates its activity. Trp-54 is modified by farnesylation, which is essential for activity. Modified by the tryptophan prenyltransferase ComQ before export to the extracellular environment.

It is found in the secreted. Functionally, part of a major quorum-sensing system that regulates the development of genetic competence. Acts through the activation of the two-component regulatory system ComP/ComA composed of a sensor histidine kinase, ComP, and a response regulator, ComA. Activates the expression of the genes for biosynthesis of poly-gamma-glutamic acid (gamma-PGA), which is involved in biofilm formation in B.subtilis natto. The chain is ComX pheromone from Bacillus subtilis subsp. natto (strain BEST195).